We begin with the raw amino-acid sequence, 409 residues long: Thiaminase-1 (409 aa).

Residues 1 to 29 (MSKVKGFIYKPLMVMLALLLVVVSPAGAG) form the signal peptide. C143 functions as the Nucleophile in the catalytic mechanism. Residue E271 is the Proton acceptor of the active site.

In terms of assembly, monomer.

The protein localises to the secreted. The enzyme catalyses pyridine + thiamine = heteropyrithiamine + 5-(2-hydroxyethyl)-4-methylthiazole. In terms of biological role, degrades thiamine by replacing its thiazole moiety with a wide range of nucleophiles. The polypeptide is Thiaminase-1 (Paenibacillus thiaminolyticus (Bacillus thiaminolyticus)).